The primary structure comprises 245 residues: Zinc finger protein AZF1 (245 aa).

Positions 1 to 15 (MALETLNSPTATTTA) are enriched in polar residues. Disordered stretches follow at residues 1-57 (MALE…NKNL) and 112-141 (LGGHKTSHRKPTNTSITSGNQELSNNSHSN). The segment at 97–119 (YKCTVCGKSFSSYQALGGHKTSH) adopts a C2H2-type 1 zinc-finger fold. Over residues 123–134 (TNTSITSGNQEL) the composition is skewed to polar residues. Residues 164–186 (HTCSICFKSFASGQALGGHKRCH) form a C2H2-type 2 zinc finger. Residues 193–231 (GNGNGSSSNSVELVAGSDVSDVDNERWSEESAIGGHRGF) are disordered.

Highly expressed in roots and at lower levels in leaves and stems.

The protein resides in the nucleus. Functionally, transcriptional repressor involved in the inhibition of plant growth under abiotic stress conditions. Can repress the expression of various genes, including osmotic stress and abscisic acid-repressive genes and auxin-inducible genes, by binding to their promoter regions in a DNA sequence-specific manner. This is Zinc finger protein AZF1 (AZF1) from Arabidopsis thaliana (Mouse-ear cress).